The following is a 988-amino-acid chain: Isoleucine--tRNA ligase (988 aa).

Positions 60–70 (PYANGALHMGH) match the 'HIGH' region motif. Position 570 (E570) interacts with L-isoleucyl-5'-AMP. A 'KMSKS' region motif is present at residues 611-615 (KMSKS). An ATP-binding site is contributed by K614. Positions 957, 960, 977, and 980 each coordinate Zn(2+).

The protein belongs to the class-I aminoacyl-tRNA synthetase family. IleS type 1 subfamily. As to quaternary structure, monomer. Zn(2+) is required as a cofactor.

Its subcellular location is the cytoplasm. It catalyses the reaction tRNA(Ile) + L-isoleucine + ATP = L-isoleucyl-tRNA(Ile) + AMP + diphosphate. In terms of biological role, catalyzes the attachment of isoleucine to tRNA(Ile). As IleRS can inadvertently accommodate and process structurally similar amino acids such as valine, to avoid such errors it has two additional distinct tRNA(Ile)-dependent editing activities. One activity is designated as 'pretransfer' editing and involves the hydrolysis of activated Val-AMP. The other activity is designated 'posttransfer' editing and involves deacylation of mischarged Val-tRNA(Ile). The polypeptide is Isoleucine--tRNA ligase (Synechocystis sp. (strain ATCC 27184 / PCC 6803 / Kazusa)).